The sequence spans 224 residues: MNSDLALLRLLQLASPGLPVGGFTYSQGLEWAVEAGWVRGVDSFVGWQREQVHDTLACLDWPVLARLYRACQAEDAEAFGHWSRFLLANRETAELRLEEQQRGAALARLLDGWQLGQAPAWRASLELTQLGGMAWLAAHWAIPLRQLALGHGFAWLEGAVMAGVKLVPFGQQAAQTLLRDLGADLPAALDQALALGDDQLGGGLPLLAIASSRHETQYTRLFRS.

Belongs to the UreF family. As to quaternary structure, ureD, UreF and UreG form a complex that acts as a GTP-hydrolysis-dependent molecular chaperone, activating the urease apoprotein by helping to assemble the nickel containing metallocenter of UreC. The UreE protein probably delivers the nickel.

The protein resides in the cytoplasm. In terms of biological role, required for maturation of urease via the functional incorporation of the urease nickel metallocenter. In Pseudomonas putida (strain ATCC 700007 / DSM 6899 / JCM 31910 / BCRC 17059 / LMG 24140 / F1), this protein is Urease accessory protein UreF.